The sequence spans 163 residues: Large ribosomal subunit protein bL17 (163 aa).

Residues 123 to 135 (AEASRATRASASK) are compositionally biased toward low complexity. Residues 123-163 (AEASRATRASASKKAAEEAETEEVVEAPAEETATEEAAEEK) form a disordered region. The segment covering 140-163 (EAETEEVVEAPAEETATEEAAEEK) has biased composition (acidic residues).

Belongs to the bacterial ribosomal protein bL17 family. As to quaternary structure, part of the 50S ribosomal subunit. Contacts protein L32.

The protein is Large ribosomal subunit protein bL17 of Corynebacterium glutamicum (strain ATCC 13032 / DSM 20300 / JCM 1318 / BCRC 11384 / CCUG 27702 / LMG 3730 / NBRC 12168 / NCIMB 10025 / NRRL B-2784 / 534).